Consider the following 222-residue polypeptide: tRNA (guanine-N(1)-)-methyltransferase (222 aa).

S-adenosyl-L-methionine-binding positions include glycine 111 and 131 to 136 (LGNYVI).

Belongs to the RNA methyltransferase TrmD family. As to quaternary structure, homodimer.

It localises to the cytoplasm. The enzyme catalyses guanosine(37) in tRNA + S-adenosyl-L-methionine = N(1)-methylguanosine(37) in tRNA + S-adenosyl-L-homocysteine + H(+). Its function is as follows. Specifically methylates guanosine-37 in various tRNAs. The polypeptide is tRNA (guanine-N(1)-)-methyltransferase (Leptospira borgpetersenii serovar Hardjo-bovis (strain JB197)).